Consider the following 215-residue polypeptide: High mobility group protein B1 (215 aa).

Residues 9-79 (PRGKMSSYAF…RYEKEMKNYV (71 aa)) constitute a DNA-binding region (HMG box 1). Cys23 bears the Cysteine sulfonic acid (-SO3H); alternate mark. Cys23 and Cys45 form a disulfide bridge. Residues 27 to 43 (HKKKHPDASVNFSEFSK) are NLS 1. A Nuclear localization signal (NLS) 1 motif is present at residues 27–43 (HKKKHPDASVNFSEFSK). Position 45 is a cysteine sulfonic acid (-SO3H); alternate (Cys45). A disordered region spans residues 75-95 (MKNYVPPKGETKKKFKDPNAP). Residues 83–94 (GETKKKFKDPNA) are compositionally biased toward basic and acidic residues. Residues 95 to 163 (PKRPPSAFFL…KYEKDIAAYR (69 aa)) constitute a DNA-binding region (HMG box 2). Cys106 bears the Cysteine sulfonic acid (-SO3H) mark. The segment covering 166–179 (GKVDAGKKVVAKAE) has biased composition (basic and acidic residues). The disordered stretch occupies residues 166-215 (GKVDAGKKVVAKAEKSKKKKEEEEDEDEDEEDEEDEEEEEEEEEDDDDDE). The tract at residues 178-184 (AEKSKKK) is NLS 2. The Nuclear localization signal (NLS) 2 motif lies at 178–184 (AEKSKKK). The segment covering 187 to 215 (EEEDEDEDEEDEEDEEEEEEEEEDDDDDE) has biased composition (acidic residues). Positions 196–210 (EDEEDEEEEEEEEED) are involved in intramolecular interaction with K-3. Positions 211–215 (DDDDE) are involved in interaction with histone H3.

This sequence belongs to the HMGB family. Reduction/oxidation of cysteine residues Cys-23, Cys-45 and Cys-106 and a possible intramolecular disulfide bond involving Cys-23 and Cys-45 give rise to different redox forms with specific functional activities: 1- fully reduced HMGB1 (HMGB1C23hC45hC106h), 2- disulfide HMGB1 (HMGB1C23-C45C106h) and 3- sulfonyl HMGB1 (HMGB1C23soC45soC106so).

It is found in the nucleus. The protein localises to the chromosome. The protein resides in the cytoplasm. It localises to the secreted. Functionally, multifunctional redox sensitive protein with various roles in different cellular compartments. Nuclear functions are attributed to fully reduced HGMB1. Associates with chromatin and binds DNA with a preference to non-canonical DNA structures such as single-stranded DNA, DNA-containing cruciforms or bent structures, supercoiled DNA and ZDNA. Can bent DNA and enhance DNA flexibility by looping thus providing a mechanism to promote activities on various gene promoters. Can restructure the canonical nucleosome. Proposed to be an universal biosensor for nucleic acids. May promote inflammatory response to sterile and infectious signals and may be involved in the coordination and integration of innate and adaptive immune responses. In the cytoplasm may function as sensor and/or chaperone for immunogenic nucleic acids, and mediate autophagy. May act as danger associated molecular pattern (DAMP) molecule that amplifies immune responses during tissue injury. This is High mobility group protein B1 (HMGB1) from Gallus gallus (Chicken).